The chain runs to 577 residues: Arginine--tRNA ligase (577 aa).

Residues Pro-122–His-132 carry the 'HIGH' region motif.

This sequence belongs to the class-I aminoacyl-tRNA synthetase family. In terms of assembly, monomer.

It is found in the cytoplasm. It carries out the reaction tRNA(Arg) + L-arginine + ATP = L-arginyl-tRNA(Arg) + AMP + diphosphate. The polypeptide is Arginine--tRNA ligase (Escherichia coli O9:H4 (strain HS)).